A 172-amino-acid polypeptide reads, in one-letter code: MAQHQVNYASAAGLPIALTSVDKLVNWGRSNSLWPLTYGLACCAIEMMASGASRYDFDRMGTIFRASPRQADVMILAGTLSKKHSEFARRLYDQMTEPKWVISMGSCANTGGMFNTYATVQGVDRIIPVDIYLPGCAPRPETLQYALMMLQKKIRRESANMNNNTKQNLRLV.

[4Fe-4S] cluster contacts are provided by C42, C43, C107, and C136.

This sequence belongs to the complex I 20 kDa subunit family. As to quaternary structure, NDH-1 is composed of 14 different subunits. Subunits NuoB, C, D, E, F, and G constitute the peripheral sector of the complex. [4Fe-4S] cluster is required as a cofactor.

It is found in the cell inner membrane. It carries out the reaction a quinone + NADH + 5 H(+)(in) = a quinol + NAD(+) + 4 H(+)(out). NDH-1 shuttles electrons from NADH, via FMN and iron-sulfur (Fe-S) centers, to quinones in the respiratory chain. The immediate electron acceptor for the enzyme in this species is believed to be ubiquinone. Couples the redox reaction to proton translocation (for every two electrons transferred, four hydrogen ions are translocated across the cytoplasmic membrane), and thus conserves the redox energy in a proton gradient. This chain is NADH-quinone oxidoreductase subunit B, found in Sulfurovum sp. (strain NBC37-1).